The chain runs to 333 residues: Aquaporin-1 (333 aa).

The disordered stretch occupies residues 1 to 26 (MQKMSEKPLYRAAENPTRNADRRAGR). 2 helical membrane passes run 85-105 (LAMF…HFTG) and 116-136 (FHGF…GGII). Residues 137-139 (NPA) carry the NPA 1 motif. A run of 3 helical transmembrane segments spans residues 156 to 176 (LVLV…VYLI), 213 to 233 (TGAI…FLSI), and 245 to 265 (LFPF…SYSA). The NPA 2 signature appears at 270-272 (NPA). The chain crosses the membrane as a helical span at residues 303 to 323 (WLFPYVGALFGAVMYQIFVGV).

The protein belongs to the MIP/aquaporin (TC 1.A.8) family.

The protein localises to the cell membrane. In terms of biological role, aquaglyceroporin that may modulate the water content and osmolytes during anhydrobiosis. The sequence is that of Aquaporin-1 from Milnesium tardigradum (Water bear).